Here is a 290-residue protein sequence, read N- to C-terminus: MKRTPHLLAIQSHVVFGHAGNSAAVFPMQRIGVNVWPLNTVQFSNHTQYGQWAGEVLAPAQIPALVEGISNIGELGHCDAVLSGYLGSAEQGRAILAGVERIKAVNPKALYLCDPVMGHPEKGCIVPPEVSAFLLEEAAARADILCPNQLELDSFCGRRAQSLEDCVNMARSLLKRGPQVVVVKHLAYPGRAEDQFEMLLVTAEHSWHLRRPLLAFPRQPVGVGDLTSGLFLARVMLGDSWVQAFEFTAAAVHEVLLETQACASYELQLVRAQDRIAHPRVRFEAQLLAL.

Residues S12 and 47–48 each bind substrate; that span reads TQ. ATP is bound by residues D114, E151, K184, and 211-214; that span reads RPLL. A substrate-binding site is contributed by D225.

This sequence belongs to the pyridoxine kinase family. PdxY subfamily. As to quaternary structure, homodimer. It depends on Mg(2+) as a cofactor.

It catalyses the reaction pyridoxal + ATP = pyridoxal 5'-phosphate + ADP + H(+). The protein operates within cofactor metabolism; pyridoxal 5'-phosphate salvage; pyridoxal 5'-phosphate from pyridoxal: step 1/1. Pyridoxal kinase involved in the salvage pathway of pyridoxal 5'-phosphate (PLP). Catalyzes the phosphorylation of pyridoxal to PLP. In Pseudomonas putida (strain GB-1), this protein is Pyridoxal kinase PdxY.